The sequence spans 209 residues: MKNLVVVDHPLIKHKLTIMRDKNTGPKEFRELLREITLLLAYEATRHLKCEEVEVETPITKTIGYRINDKDIVVVPILRAGLVMADGILELLPNASVGHIGIYRDPETLQAVEYYAKLPPLNDDKEVFLLDPMLATGVSSIKAIEILKENGAKKITLVALIAAPEGVEAVEKKYEDVKIYVAALDERLNDHGYIIPGLGDAGDRLFRTK.

5-phospho-alpha-D-ribose 1-diphosphate contacts are provided by residues Arg-79, Arg-104, and 131–139 (DPMLATGVS). Uracil contacts are provided by residues Ile-194 and 199-201 (GDA). Asp-200 is a binding site for 5-phospho-alpha-D-ribose 1-diphosphate.

This sequence belongs to the UPRTase family. Mg(2+) serves as cofactor.

It carries out the reaction UMP + diphosphate = 5-phospho-alpha-D-ribose 1-diphosphate + uracil. Its pathway is pyrimidine metabolism; UMP biosynthesis via salvage pathway; UMP from uracil: step 1/1. Allosterically activated by GTP. Functionally, catalyzes the conversion of uracil and 5-phospho-alpha-D-ribose 1-diphosphate (PRPP) to UMP and diphosphate. The chain is Uracil phosphoribosyltransferase from Thermotoga maritima (strain ATCC 43589 / DSM 3109 / JCM 10099 / NBRC 100826 / MSB8).